Reading from the N-terminus, the 130-residue chain is Small ribosomal subunit protein uS9 (130 aa).

This sequence belongs to the universal ribosomal protein uS9 family.

This Streptococcus gordonii (strain Challis / ATCC 35105 / BCRC 15272 / CH1 / DL1 / V288) protein is Small ribosomal subunit protein uS9.